The sequence spans 673 residues: UvrABC system protein B (673 aa).

The Helicase ATP-binding domain occupies 26 to 414; that stretch reads ANFEAGLAKQ…AGEVTELVVR (389 aa). 39–46 contacts ATP; the sequence is GVTGSGKT. The short motif at 92 to 115 is the Beta-hairpin element; the sequence is YYDYYQPEAYVPSSDTFIEKDSSI. The Helicase C-terminal domain maps to 431–597; that stretch reads QVDDLMSEVH…SVERPIADIM (167 aa). 2 stretches are compositionally biased toward basic and acidic residues: residues 600-609 and 618-628; these read ARDDAAEKKS and HVAEETPDYRA. The interval 600–628 is disordered; the sequence is ARDDAAEKKSGKGRSKSRHVAEETPDYRA. Positions 635–670 constitute a UVR domain; sequence AGKLKSLEQKMYQHAKDLEFEAAAQIRDQIQKLKAA.

Belongs to the UvrB family. Forms a heterotetramer with UvrA during the search for lesions. Interacts with UvrC in an incision complex.

Its subcellular location is the cytoplasm. The UvrABC repair system catalyzes the recognition and processing of DNA lesions. A damage recognition complex composed of 2 UvrA and 2 UvrB subunits scans DNA for abnormalities. Upon binding of the UvrA(2)B(2) complex to a putative damaged site, the DNA wraps around one UvrB monomer. DNA wrap is dependent on ATP binding by UvrB and probably causes local melting of the DNA helix, facilitating insertion of UvrB beta-hairpin between the DNA strands. Then UvrB probes one DNA strand for the presence of a lesion. If a lesion is found the UvrA subunits dissociate and the UvrB-DNA preincision complex is formed. This complex is subsequently bound by UvrC and the second UvrB is released. If no lesion is found, the DNA wraps around the other UvrB subunit that will check the other stand for damage. The polypeptide is UvrABC system protein B (Xanthomonas axonopodis pv. citri (strain 306)).